The sequence spans 407 residues: 12S rRNA N(4)-cytidine methyltransferase METTL15 (407 aa).

S-adenosyl-L-methionine contacts are provided by residues 100-102, Asp-119, Phe-146, Asp-169, and Gln-176; that span reads GGH. Ser-358 bears the Phosphoserine mark.

Belongs to the methyltransferase superfamily. RsmH family.

Its subcellular location is the mitochondrion matrix. It carries out the reaction cytidine(839) in 12S rRNA + S-adenosyl-L-methionine = N(4)-methylcytidine(839) in 12S rRNA + S-adenosyl-L-homocysteine + H(+). N4-methylcytidine (m4C) methyltransferase responsible for the methylation of position C839 in mitochondrial 12S rRNA. Involved in the stabilization of 12S rRNA folding, therefore facilitating the assembly of the mitochondrial small ribosomal subunits. The sequence is that of 12S rRNA N(4)-cytidine methyltransferase METTL15 from Homo sapiens (Human).